The following is a 338-amino-acid chain: Lipoate-protein ligase A (338 aa).

The BPL/LPL catalytic domain occupies 29-216 (PATQRVLFLW…AFFAHYGERV (188 aa)). Residues R71, 76–79 (GAVF), and K134 contribute to the ATP site. Position 134 (K134) interacts with (R)-lipoate.

It belongs to the LplA family. Monomer.

It is found in the cytoplasm. The catalysed reaction is L-lysyl-[lipoyl-carrier protein] + (R)-lipoate + ATP = N(6)-[(R)-lipoyl]-L-lysyl-[lipoyl-carrier protein] + AMP + diphosphate + H(+). It participates in protein modification; protein lipoylation via exogenous pathway; protein N(6)-(lipoyl)lysine from lipoate: step 1/2. It functions in the pathway protein modification; protein lipoylation via exogenous pathway; protein N(6)-(lipoyl)lysine from lipoate: step 2/2. Catalyzes both the ATP-dependent activation of exogenously supplied lipoate to lipoyl-AMP and the transfer of the activated lipoyl onto the lipoyl domains of lipoate-dependent enzymes. In Escherichia coli (strain 55989 / EAEC), this protein is Lipoate-protein ligase A.